The chain runs to 500 residues: Signal transduction histidine-protein kinase/phosphatase UhpB (500 aa).

8 consecutive transmembrane segments (helical) span residues 8–28, 78–98, 112–132, 140–160, 185–205, 207–224, 231–249, and 253–273; these read LITVVACFFIFSAAWFCLWSI, VALAHLPLLMIGSVLTLLPVA, LLLQGAALTAAALLQSLPWLG, ALLLTLTGGLTLAPICLVFWH, HLIWYLLLFIVSLWLQLGLPA, LSRFTPFCLALPIIALAW, ALIATLMNAIALIASQTWH, and VDLLLSLLAQSLTGLLLGAGI. The Cytoplasmic portion of the chain corresponds to 274–500; it reads QRLRELNQSL…VSVSLPQRYV (227 aa). One can recognise a Histidine kinase domain in the interval 311-499; the sequence is ELHDDIGQTI…RVSVSLPQRY (189 aa). Residue His-313 is modified to Phosphohistidine; by autocatalysis.

Post-translationally, autophosphorylated.

The protein localises to the cell inner membrane. It carries out the reaction ATP + protein L-histidine = ADP + protein N-phospho-L-histidine.. In terms of biological role, part of the UhpABC signaling cascade that controls the expression of the hexose phosphate transporter UhpT. UhpB functions as a membrane-associated protein kinase that autophosphorylates in response to interaction with UhpC, and subsequently transfers its phosphate group to the response regulator UhpA. Can also dephosphorylate UhpA. This is Signal transduction histidine-protein kinase/phosphatase UhpB (uhpB) from Salmonella typhimurium (strain LT2 / SGSC1412 / ATCC 700720).